The sequence spans 205 residues: High frequency lysogenization protein HflD homolog (205 aa).

This sequence belongs to the HflD family.

It localises to the cytoplasm. The protein localises to the cell inner membrane. In Aliivibrio fischeri (strain ATCC 700601 / ES114) (Vibrio fischeri), this protein is High frequency lysogenization protein HflD homolog.